Reading from the N-terminus, the 378-residue chain is AA13 family lytic polysaccharide monooxygenase A (378 aa).

Positions 1-17 (MKWSVIQALALASGVQA) are cleaved as a signal peptide. His-18 lines the Cu(2+) pocket. Residue His-18 is modified to Methylhistidine. The Chitin-binding type-4 domain maps to 18-244 (HGYLTFPMSR…PQIYLTCADI (227 aa)). Disulfide bonds link Cys-39/Cys-42, Cys-65/Cys-241, Cys-101/Cys-199, Cys-117/Cys-144, Cys-152/Cys-160, Cys-166/Cys-172, and Cys-180/Cys-188. His-108 contacts Cu(2+). N-linked (GlcNAc...) asparagine glycosylation occurs at Asn-221. Residue Tyr-238 participates in Cu(2+) binding. Low complexity predominate over residues 250 to 263 (DSQSPPTTTTTSTP). The interval 250–272 (DSQSPPTTTTTSTPASPPPTSCA) is disordered. Residues 272–378 (ATPAASVAVT…GTATVDTAWK (107 aa)) enclose the CBM20 domain.

This sequence belongs to the polysaccharide monooxygenase AA13 family. Cu(2+) serves as cofactor. O-mannosylated.

The protein resides in the secreted. It catalyses the reaction starch + reduced acceptor + O2 = D-glucono-1,5-lactone-terminated malto-oligosaccharides + short-chain malto-oligosaccharides + acceptor + H2O.. Its activity is regulated as follows. Activity is inhibited by both beta-cyclodextrin or amylose that block the access to the active site. Its function is as follows. Starch-active lytic polysaccharide monooxygenase that oxidizes the C1 position of starch substrates. Catalysis by LPMOs requires the reduction of the active-site copper from Cu(II) to Cu(I) by a reducing agent and H(2)O(2) or O(2) as a cosubstrate. The protein is AA13 family lytic polysaccharide monooxygenase A of Pyricularia oryzae (strain 70-15 / ATCC MYA-4617 / FGSC 8958) (Rice blast fungus).